The primary structure comprises 425 residues: Glucan 1,3-beta-glucosidase (425 aa).

The N-terminal stretch at 1 to 19 (MNLTLLLLALIFSPSLIFS) is a signal peptide. The active-site Proton donor is the Glu-219. 2 cysteine pairs are disulfide-bonded: Cys-301/Cys-423 and Cys-326/Cys-352. Glu-318 serves as the catalytic Nucleophile.

It belongs to the glycosyl hydrolase 5 (cellulase A) family.

The protein localises to the secreted. It catalyses the reaction Successive hydrolysis of beta-D-glucose units from the non-reducing ends of (1-&gt;3)-beta-D-glucans, releasing alpha-glucose.. Beta-glucanases participate in the metabolism of beta-glucan, the main structural component of the cell wall. It could also function biosynthetically as a transglycosylase. This chain is Glucan 1,3-beta-glucosidase, found in Schwanniomyces occidentalis (Yeast).